Consider the following 360-residue polypeptide: Ribosomal RNA large subunit methyltransferase M (360 aa).

S-adenosyl-L-methionine contacts are provided by residues Ser-192, 225-228 (APGG), Asp-244, Asp-264, and Asp-280. Residue Lys-309 is the Proton acceptor of the active site.

The protein belongs to the class I-like SAM-binding methyltransferase superfamily. RNA methyltransferase RlmE family. RlmM subfamily. As to quaternary structure, monomer.

Its subcellular location is the cytoplasm. The catalysed reaction is cytidine(2498) in 23S rRNA + S-adenosyl-L-methionine = 2'-O-methylcytidine(2498) in 23S rRNA + S-adenosyl-L-homocysteine + H(+). Catalyzes the 2'-O-methylation at nucleotide C2498 in 23S rRNA. The polypeptide is Ribosomal RNA large subunit methyltransferase M (Alkalilimnicola ehrlichii (strain ATCC BAA-1101 / DSM 17681 / MLHE-1)).